The chain runs to 106 residues: Small ribosomal subunit protein uS10 (106 aa).

It belongs to the universal ribosomal protein uS10 family. As to quaternary structure, part of the 30S ribosomal subunit.

In terms of biological role, involved in the binding of tRNA to the ribosomes. The polypeptide is Small ribosomal subunit protein uS10 (Prochlorococcus marinus (strain MIT 9303)).